Here is a 500-residue protein sequence, read N- to C-terminus: MDVFKQSEVWFVIGSQNLYGPKTLQQVMDNAHQVVNSLNNEAGLPVKLVLKPLVTTPDEITALCREANYDTACIGIMTWLHTFSPAKMWIGGLSILNKPLLQFHTQFNAQIPWKTMDMDFMNLNHTAHGGREFGFIGARMRQQHSVITGHWQDKEAHQRIGQWMRVAAAKQESQQLKVARFGDNMREVAVTEGDKVAAQIQFGYSVNAYGIGDLVAVVDAVSKGDIDTLVEEYEATYRFTDAVKLNGDKRENLLDAARIELGMTRFLEQGGFKAFTTNFENLYGLKQLPGLAVQRLMQQGYGFGGEGDWKTAALLRILKVMGTGLKGGTSFMEDYTYNFQPGNDLVVGSHMLEVCPSIAKEEKPLLDVQHLGIGGKADPARLIFSTPAGPALNASLIDMGNRFRLLVNVVDTVEQPHPLPKLPVARAIWQAQPSLATAAEAWIIAGGAHHTVFSQAVGVDELRLYAEMHGIEFLLIDNDTTLPAFKNEIRWNEVYYQLNR.

Residues E306, E333, H350, and H450 each contribute to the Mn(2+) site.

Belongs to the arabinose isomerase family. As to quaternary structure, homohexamer. Requires Mn(2+) as cofactor.

It carries out the reaction beta-L-arabinopyranose = L-ribulose. The protein operates within carbohydrate degradation; L-arabinose degradation via L-ribulose; D-xylulose 5-phosphate from L-arabinose (bacterial route): step 1/3. Catalyzes the conversion of L-arabinose to L-ribulose. The chain is L-arabinose isomerase from Yersinia pestis bv. Antiqua (strain Nepal516).